We begin with the raw amino-acid sequence, 431 residues long: MSTIIDVYAREVLDSRGNPTVEVEVYTESGAFGRAIVPSGASTGEHEAVELRDGDKSRYLGKGVLNAVNNVNEAIAPEIVGFDVTDQAGIDRAMIELDGTPNKGKLGANAILGVSMAVAHAAADFVGLPLYRYLGGFNAKQLPTPMMNIINGGSHADNNVDFQEFMILPVGAPTFKESIRMGAEVFHALKAVLHDKGLNTAVGDEGGFAPNLGSNREALEVIIEAIEKAGYKAGENVFLGMDVASSEFYNKETGKYDLAGEGRTGLTSAEMVDFYEELCKDFPIISIEDGLDENDWDGHKLLTERIGDKVQLVGDDLFVTNTQKLAEGIEKGISNSILIKVNQIGTLTETFEAIEMAKRAGYTAVVSHRSGETEDATIADIAVATNAGQIKTGSMSRTDRIAKYNQLLRIEDELGEIAVYDGIKSFYNIKR.

Gln163 serves as a coordination point for (2R)-2-phosphoglycerate. The active-site Proton donor is the Glu205. 3 residues coordinate Mg(2+): Asp242, Glu288, and Asp315. Residues Lys340, Arg369, Ser370, and Lys391 each coordinate (2R)-2-phosphoglycerate. The active-site Proton acceptor is Lys340.

It belongs to the enolase family. The cofactor is Mg(2+).

The protein localises to the cytoplasm. The protein resides in the secreted. Its subcellular location is the cell surface. The enzyme catalyses (2R)-2-phosphoglycerate = phosphoenolpyruvate + H2O. It participates in carbohydrate degradation; glycolysis; pyruvate from D-glyceraldehyde 3-phosphate: step 4/5. Its function is as follows. Catalyzes the reversible conversion of 2-phosphoglycerate (2-PG) into phosphoenolpyruvate (PEP). It is essential for the degradation of carbohydrates via glycolysis. This chain is Enolase, found in Bacillus mycoides (strain KBAB4) (Bacillus weihenstephanensis).